The sequence spans 219 residues: 3,4-dihydroxy-2-butanone 4-phosphate synthase (219 aa).

D-ribulose 5-phosphate contacts are provided by residues 28-29 (RE), Asp33, 140-144 (REGHT), and Glu164. Glu29 serves as a coordination point for Mg(2+). His143 is a Mg(2+) binding site.

The protein belongs to the DHBP synthase family. Homodimer. The cofactor is Mg(2+). Mn(2+) serves as cofactor.

It catalyses the reaction D-ribulose 5-phosphate = (2S)-2-hydroxy-3-oxobutyl phosphate + formate + H(+). Its pathway is cofactor biosynthesis; riboflavin biosynthesis; 2-hydroxy-3-oxobutyl phosphate from D-ribulose 5-phosphate: step 1/1. Catalyzes the conversion of D-ribulose 5-phosphate to formate and 3,4-dihydroxy-2-butanone 4-phosphate. The sequence is that of 3,4-dihydroxy-2-butanone 4-phosphate synthase from Methanocorpusculum labreanum (strain ATCC 43576 / DSM 4855 / Z).